We begin with the raw amino-acid sequence, 431 residues long: Ornithine decarboxylase (431 aa).

The residue at position 94 (Lys-94) is an N6-(pyridoxal phosphate)lysine. Residues Ser-226, Gly-264, and 297–300 (EPGR) contribute to the pyridoxal 5'-phosphate site. Residue 340-341 (YD) participates in substrate binding. Catalysis depends on Cys-376, which acts as the Proton donor; shared with dimeric partner. Substrate is bound at residue Asp-377. Residue Tyr-405 participates in pyridoxal 5'-phosphate binding.

The protein belongs to the Orn/Lys/Arg decarboxylase class-II family. Homodimer. Only the dimer is catalytically active, as the active sites are constructed of residues from both monomers. Pyridoxal 5'-phosphate serves as cofactor.

The catalysed reaction is L-ornithine + H(+) = putrescine + CO2. It participates in amine and polyamine biosynthesis; putrescine biosynthesis via L-ornithine pathway; putrescine from L-ornithine: step 1/1. Its activity is regulated as follows. Inhibited by antizyme (AZ) in response to polyamine levels. AZ inhibits the assembly of the functional homodimer by binding to ODC monomers and targeting them for ubiquitin-independent proteolytic destruction by the 26S proteasome. In terms of biological role, catalyzes the first and rate-limiting step of polyamine biosynthesis that converts ornithine into putrescine, which is the precursor for the polyamines, spermidine and spermine. Polyamines are essential for cell proliferation and are implicated in cellular processes, ranging from DNA replication to apoptosis. The polypeptide is Ornithine decarboxylase (Datura stramonium (Jimsonweed)).